The chain runs to 205 residues: ATP-dependent Clp protease proteolytic subunit 2 (205 aa).

S100 functions as the Nucleophile in the catalytic mechanism. Residue H125 is part of the active site.

Belongs to the peptidase S14 family. In terms of assembly, fourteen ClpP subunits assemble into 2 heptameric rings which stack back to back to give a disk-like structure with a central cavity, resembling the structure of eukaryotic proteasomes.

The protein localises to the cytoplasm. The catalysed reaction is Hydrolysis of proteins to small peptides in the presence of ATP and magnesium. alpha-casein is the usual test substrate. In the absence of ATP, only oligopeptides shorter than five residues are hydrolyzed (such as succinyl-Leu-Tyr-|-NHMec, and Leu-Tyr-Leu-|-Tyr-Trp, in which cleavage of the -Tyr-|-Leu- and -Tyr-|-Trp bonds also occurs).. Functionally, cleaves peptides in various proteins in a process that requires ATP hydrolysis. Has a chymotrypsin-like activity. Plays a major role in the degradation of misfolded proteins. The polypeptide is ATP-dependent Clp protease proteolytic subunit 2 (Chlamydia abortus (strain DSM 27085 / S26/3) (Chlamydophila abortus)).